The sequence spans 133 residues: Antifungal protein ginkbilobin-like protein 1 (133 aa).

An N-terminal signal peptide occupies residues 1 to 24 (MSMGSFGFALAVMVLAVLVASAAG). The Gnk2-homologous domain maps to 28-133 (TNFVSSACNT…CFIRYEQYSI (106 aa)). 3 disulfide bridges follow: cysteine 35–cysteine 111, cysteine 87–cysteine 96, and cysteine 99–cysteine 124. Position 36 (asparagine 36) interacts with alpha-D-mannopyranose. Positions 118 and 129 each coordinate alpha-D-mannopyranose.

Its function is as follows. Exerts antifungal activity through its carbohydrate-binding specificity. In Picea sitchensis (Sitka spruce), this protein is Antifungal protein ginkbilobin-like protein 1.